Here is a 327-residue protein sequence, read N- to C-terminus: Methionyl-tRNA formyltransferase (327 aa).

122–125 contacts (6S)-5,6,7,8-tetrahydrofolate; the sequence is SLLP.

It belongs to the Fmt family.

It catalyses the reaction L-methionyl-tRNA(fMet) + (6R)-10-formyltetrahydrofolate = N-formyl-L-methionyl-tRNA(fMet) + (6S)-5,6,7,8-tetrahydrofolate + H(+). In terms of biological role, attaches a formyl group to the free amino group of methionyl-tRNA(fMet). The formyl group appears to play a dual role in the initiator identity of N-formylmethionyl-tRNA by promoting its recognition by IF2 and preventing the misappropriation of this tRNA by the elongation apparatus. The sequence is that of Methionyl-tRNA formyltransferase from Ralstonia nicotianae (strain ATCC BAA-1114 / GMI1000) (Ralstonia solanacearum).